A 227-amino-acid polypeptide reads, in one-letter code: dTTP/UTP pyrophosphatase (227 aa).

The disordered stretch occupies residues 1-21 (MNDLPRAELPGSGSPNPESLI). The active-site Proton acceptor is Asp87.

Belongs to the Maf family. YhdE subfamily. The cofactor is a divalent metal cation.

It localises to the cytoplasm. The catalysed reaction is dTTP + H2O = dTMP + diphosphate + H(+). The enzyme catalyses UTP + H2O = UMP + diphosphate + H(+). Its function is as follows. Nucleoside triphosphate pyrophosphatase that hydrolyzes dTTP and UTP. May have a dual role in cell division arrest and in preventing the incorporation of modified nucleotides into cellular nucleic acids. This is dTTP/UTP pyrophosphatase from Rhodopirellula baltica (strain DSM 10527 / NCIMB 13988 / SH1).